We begin with the raw amino-acid sequence, 206 residues long: Large ribosomal subunit protein uL13y (206 aa).

This sequence belongs to the universal ribosomal protein uL13 family.

The sequence is that of Large ribosomal subunit protein uL13y (RPL13AB) from Arabidopsis thaliana (Mouse-ear cress).